The primary structure comprises 487 residues: CUGBP Elav-like family member 1 (487 aa).

An N-acetylmethionine modification is found at methionine 1. Threonine 4 carries the post-translational modification Phosphothreonine. 2 consecutive RRM domains span residues 16 to 99 (IKMF…PADS) and 108 to 188 (RKLF…FADT). Residue lysine 109 forms a Glycyl lysine isopeptide (Lys-Gly) (interchain with G-Cter in SUMO2) linkage. Serine 179 and serine 303 each carry phosphoserine. The tract at residues 277 to 310 (TPSGTNALTTSSSPLSVLTSSAGSSPSSSSSNSV) is disordered. A compositionally biased stretch (low complexity) spans 283 to 310 (ALTTSSSPLSVLTSSAGSSPSSSSSNSV). Positions 402–480 (ANLFIYHLPQ…KRLKVQLKRS (79 aa)) constitute an RRM 3 domain.

This sequence belongs to the CELF/BRUNOL family. As to quaternary structure, interacts with HNRNPH1; the interaction in RNA-dependent. Interacts with PARN. Component of an EIF2 complex at least composed of CELF1/CUGBP1, CALR, CALR3, EIF2S1, EIF2S2, HSP90B1 and HSPA5. Associates with polysomes.

It localises to the nucleus. Its subcellular location is the cytoplasm. In terms of biological role, RNA-binding protein implicated in the regulation of several post-transcriptional events. Involved in pre-mRNA alternative splicing, mRNA translation and stability. Mediates exon inclusion and/or exclusion in pre-mRNA that are subject to tissue-specific and developmentally regulated alternative splicing. Specifically activates exon 5 inclusion of cardiac isoforms of TNNT2 during heart remodeling at the juvenile to adult transition. Acts both as an activator and as a repressor of a pair of coregulated exons: promotes inclusion of the smooth muscle (SM) exon but exclusion of the non-muscle (NM) exon in actinin pre-mRNAs. Activates SM exon 5 inclusion by antagonizing the repressive effect of PTB. Promotes exclusion of exon 11 of the INSR pre-mRNA. Inhibits, together with HNRNPH1, insulin receptor (IR) pre-mRNA exon 11 inclusion in myoblast. Increases translation and controls the choice of translation initiation codon of CEBPB mRNA. Increases mRNA translation of CEBPB in aging liver. Increases translation of CDKN1A mRNA by antagonizing the repressive effect of CALR3. Mediates rapid cytoplasmic mRNA deadenylation. Recruits the deadenylase PARN to the poly(A) tail of EDEN-containing mRNAs to promote their deadenylation. Required for completion of spermatogenesis. Binds to (CUG)n triplet repeats in the 3'-UTR of transcripts such as DMPK and to Bruno response elements (BREs). Binds to muscle-specific splicing enhancer (MSE) intronic sites flanking the alternative exon 5 of TNNT2 pre-mRNA. Binds to AU-rich sequences (AREs or EDEN-like) localized in the 3'-UTR of JUN and FOS mRNAs. Binds to the IR RNA. Binds to the 5'-region of CDKN1A and CEBPB mRNAs. Binds with the 5'-region of CEBPB mRNA in aging liver. May be a specific regulator of miRNA biogenesis. Binds to primary microRNA pri-MIR140 and, with CELF2, negatively regulates the processing to mature miRNA. This chain is CUGBP Elav-like family member 1 (Celf1), found in Rattus norvegicus (Rat).